The following is a 226-amino-acid chain: Cytidylate kinase (226 aa).

10-18 (GPASSGKST) contributes to the ATP binding site.

It belongs to the cytidylate kinase family. Type 1 subfamily.

The protein resides in the cytoplasm. It catalyses the reaction CMP + ATP = CDP + ADP. The catalysed reaction is dCMP + ATP = dCDP + ADP. In Streptococcus pyogenes serotype M1, this protein is Cytidylate kinase.